A 427-amino-acid polypeptide reads, in one-letter code: Tryptophan synthase beta chain (427 aa).

Residue Lys-100 is modified to N6-(pyridoxal phosphate)lysine.

The protein belongs to the TrpB family. As to quaternary structure, tetramer of two alpha and two beta chains. Requires pyridoxal 5'-phosphate as cofactor.

It carries out the reaction (1S,2R)-1-C-(indol-3-yl)glycerol 3-phosphate + L-serine = D-glyceraldehyde 3-phosphate + L-tryptophan + H2O. The protein operates within amino-acid biosynthesis; L-tryptophan biosynthesis; L-tryptophan from chorismate: step 5/5. Its function is as follows. The beta subunit is responsible for the synthesis of L-tryptophan from indole and L-serine. This Streptomyces coelicolor (strain ATCC BAA-471 / A3(2) / M145) protein is Tryptophan synthase beta chain (trpB).